The chain runs to 303 residues: Glutaminase (303 aa).

Residues Ser-63, Asn-113, Glu-157, Asn-164, Tyr-188, Tyr-239, and Val-257 each coordinate substrate.

It belongs to the glutaminase family. In terms of assembly, homotetramer.

It catalyses the reaction L-glutamine + H2O = L-glutamate + NH4(+). The chain is Glutaminase from Saccharopolyspora erythraea (strain ATCC 11635 / DSM 40517 / JCM 4748 / NBRC 13426 / NCIMB 8594 / NRRL 2338).